The primary structure comprises 356 residues: Alanine racemase, catabolic (356 aa).

The active-site Proton acceptor; specific for D-alanine is the Lys35. Residue Lys35 is modified to N6-(pyridoxal phosphate)lysine. A substrate-binding site is contributed by Arg130. Catalysis depends on Tyr253, which acts as the Proton acceptor; specific for L-alanine. A substrate-binding site is contributed by Met301.

This sequence belongs to the alanine racemase family. The cofactor is pyridoxal 5'-phosphate.

It carries out the reaction L-alanine = D-alanine. Functionally, isomerizes L-alanine to D-alanine which is then oxidized to pyruvate by DadA. The polypeptide is Alanine racemase, catabolic (dadX) (Escherichia coli O6:H1 (strain CFT073 / ATCC 700928 / UPEC)).